Consider the following 808-residue polypeptide: Glutamate receptor 1.1 (808 aa).

The N-terminal stretch at M1–A19 is a signal peptide. At A20–K541 the chain is on the extracellular side. N288, N339, and N504 each carry an N-linked (GlcNAc...) asparagine glycan. A helical membrane pass occupies residues S542 to E562. Topologically, residues R563–Q570 are cytoplasmic. The chain crosses the membrane as a helical span at residues G571–A591. At H592–R602 the chain is on the cytoplasmic side. The helical transmembrane segment at F603–L623 threads the bilayer. The Extracellular segment spans residues T624 to R771. The chain crosses the membrane as a helical span at residues G772–T792. Residues R793–K808 are Cytoplasmic-facing.

This sequence belongs to the glutamate-gated ion channel (TC 1.A.10.1) family. May form heteromers. As to expression, expressed predominantly in roots. First detected in the root-shoot junction, and later in lateral roots and at the margin of matures leaves.

It localises to the membrane. In terms of biological role, glutamate-gated receptor that probably acts as a non-selective cation channel. Can transport sodium, potassium, and calcium ions. Functions as a carbon and nitrogen regulator and/or sensor that regulates carbon and nitrogen metabolism and distinct physiological process such as germination through the control of acid abscisic (ABA) biosynthesis. May be involved in light-signal transduction and calcium homeostasis via the regulation of calcium influx into cells. Seems required for the regulation of the abscisic acid (ABA) signaling pathway that modulates many aspects of plant physiology such as seed germination and response to drought (e.g. stomata opening). The chain is Glutamate receptor 1.1 (GLR1.1) from Arabidopsis thaliana (Mouse-ear cress).